Consider the following 265-residue polypeptide: Hydroxyethylthiazole kinase (265 aa).

A substrate-binding site is contributed by methionine 55. Residues arginine 130 and serine 176 each contribute to the ATP site. Substrate is bound at residue glycine 203.

This sequence belongs to the Thz kinase family. Requires Mg(2+) as cofactor.

The catalysed reaction is 5-(2-hydroxyethyl)-4-methylthiazole + ATP = 4-methyl-5-(2-phosphooxyethyl)-thiazole + ADP + H(+). It participates in cofactor biosynthesis; thiamine diphosphate biosynthesis; 4-methyl-5-(2-phosphoethyl)-thiazole from 5-(2-hydroxyethyl)-4-methylthiazole: step 1/1. Functionally, catalyzes the phosphorylation of the hydroxyl group of 4-methyl-5-beta-hydroxyethylthiazole (THZ). This Leptospira interrogans serogroup Icterohaemorrhagiae serovar copenhageni (strain Fiocruz L1-130) protein is Hydroxyethylthiazole kinase.